The sequence spans 309 residues: Porphobilinogen deaminase (309 aa).

S-(dipyrrolylmethanemethyl)cysteine is present on cysteine 241.

Belongs to the HMBS family. Monomer. Dipyrromethane is required as a cofactor.

The catalysed reaction is 4 porphobilinogen + H2O = hydroxymethylbilane + 4 NH4(+). Its pathway is porphyrin-containing compound metabolism; protoporphyrin-IX biosynthesis; coproporphyrinogen-III from 5-aminolevulinate: step 2/4. In terms of biological role, tetrapolymerization of the monopyrrole PBG into the hydroxymethylbilane pre-uroporphyrinogen in several discrete steps. The protein is Porphobilinogen deaminase of Bacillus cereus (strain ZK / E33L).